A 105-amino-acid chain; its full sequence is ATP synthase F(0) complex subunit a (105 aa).

3 consecutive transmembrane segments (helical) span residues 14–34, 47–67, and 72–92; these read EGTP…SLFI, LTAG…LLPM, and AILT…VAMI.

The protein belongs to the ATPase A chain family. As to quaternary structure, component of the ATP synthase complex composed at least of ATP5F1A/subunit alpha, ATP5F1B/subunit beta, ATP5MC1/subunit c (homooctomer), MT-ATP6/subunit a, MT-ATP8/subunit 8, ATP5ME/subunit e, ATP5MF/subunit f, ATP5MG/subunit g, ATP5MK/subunit k, ATP5MJ/subunit j, ATP5F1C/subunit gamma, ATP5F1D/subunit delta, ATP5F1E/subunit epsilon, ATP5PF/subunit F6, ATP5PB/subunit b, ATP5PD/subunit d, ATP5PO/subunit OSCP. ATP synthase complex consists of a soluble F(1) head domain (subunits alpha(3) and beta(3)) - the catalytic core - and a membrane F(0) domain - the membrane proton channel (subunits c, a, 8, e, f, g, k and j). These two domains are linked by a central stalk (subunits gamma, delta, and epsilon) rotating inside the F1 region and a stationary peripheral stalk (subunits F6, b, d, and OSCP). Interacts with DNAJC30; interaction is direct.

The protein resides in the mitochondrion inner membrane. It catalyses the reaction H(+)(in) = H(+)(out). In terms of biological role, subunit a, of the mitochondrial membrane ATP synthase complex (F(1)F(0) ATP synthase or Complex V) that produces ATP from ADP in the presence of a proton gradient across the membrane which is generated by electron transport complexes of the respiratory chain. ATP synthase complex consist of a soluble F(1) head domain - the catalytic core - and a membrane F(1) domain - the membrane proton channel. These two domains are linked by a central stalk rotating inside the F(1) region and a stationary peripheral stalk. During catalysis, ATP synthesis in the catalytic domain of F(1) is coupled via a rotary mechanism of the central stalk subunits to proton translocation. With the subunit c (ATP5MC1), forms the proton-conducting channel in the F(0) domain, that contains two crucial half-channels (inlet and outlet) that facilitate proton movement from the mitochondrial intermembrane space (IMS) into the matrix. Protons are taken up via the inlet half-channel and released through the outlet half-channel, following a Grotthuss mechanism. This is ATP synthase F(0) complex subunit a from Salmo trutta (Brown trout).